Consider the following 471-residue polypeptide: ATP synthase subunit beta 2 (471 aa).

Position 157–164 (Gly157–Thr164) interacts with ATP.

This sequence belongs to the ATPase alpha/beta chains family. As to quaternary structure, F-type ATPases have 2 components, CF(1) - the catalytic core - and CF(0) - the membrane proton channel. CF(1) has five subunits: alpha(3), beta(3), gamma(1), delta(1), epsilon(1). CF(0) has three main subunits: a(1), b(2) and c(9-12). The alpha and beta chains form an alternating ring which encloses part of the gamma chain. CF(1) is attached to CF(0) by a central stalk formed by the gamma and epsilon chains, while a peripheral stalk is formed by the delta and b chains.

It localises to the cell inner membrane. It carries out the reaction ATP + H2O + 4 H(+)(in) = ADP + phosphate + 5 H(+)(out). Produces ATP from ADP in the presence of a proton gradient across the membrane. The catalytic sites are hosted primarily by the beta subunits. The polypeptide is ATP synthase subunit beta 2 (Pelobacter propionicus (strain DSM 2379 / NBRC 103807 / OttBd1)).